A 520-amino-acid chain; its full sequence is Ribonuclease Y (520 aa).

The helical transmembrane segment at 5 to 25 (ITIISSLLFLIVGLVVGSLIF) threads the bilayer. The tract at residues 76–127 (ELRGRRTETQKAENRLLQREENLDRKDTSLSKREATLERKEESISKRQQQIE) is disordered. The 64-residue stretch at 210–273 (TVSVVTLPND…EIARIALEKL (64 aa)) folds into the KH domain. Residues 336–429 (VLNHSLEVSK…VAAADALSAA (94 aa)) enclose the HD domain.

Belongs to the RNase Y family.

The protein resides in the cell membrane. Its function is as follows. Endoribonuclease that initiates mRNA decay. This is Ribonuclease Y from Listeria monocytogenes serotype 1/2a (strain 10403S).